A 113-amino-acid chain; its full sequence is UPF0102 protein Shal_4069 (113 aa).

It belongs to the UPF0102 family.

This chain is UPF0102 protein Shal_4069, found in Shewanella halifaxensis (strain HAW-EB4).